The following is a 228-amino-acid chain: Uridylate kinase (228 aa).

9–10 (GS) is a binding site for ATP. Gly44 contacts UMP. ATP is bound by residues Gly45 and Arg49. Residues Asp66 and 114-120 (IVAAQTT) contribute to the UMP site. Residues Thr140, Tyr146, and Asp149 each contribute to the ATP site.

Belongs to the UMP kinase family. Homohexamer.

Its subcellular location is the cytoplasm. The catalysed reaction is UMP + ATP = UDP + ADP. It functions in the pathway pyrimidine metabolism; CTP biosynthesis via de novo pathway; UDP from UMP (UMPK route): step 1/1. Its activity is regulated as follows. Inhibited by UTP. Functionally, catalyzes the reversible phosphorylation of UMP to UDP. The protein is Uridylate kinase of Haloarcula marismortui (strain ATCC 43049 / DSM 3752 / JCM 8966 / VKM B-1809) (Halobacterium marismortui).